Consider the following 27-residue polypeptide: uncharacterized protein (27 aa).

It localises to the plastid. The protein localises to the chloroplast. This is an uncharacterized protein from Trieres chinensis (Marine centric diatom).